The chain runs to 459 residues: Fibrinogen C domain-containing protein 1 (459 aa).

The segment at 1–22 is disordered; the sequence is MVHERWKTVGSASQLEDRPRDK. Residues 1–33 are Cytoplasmic-facing; it reads MVHERWKTVGSASQLEDRPRDKPQRASCSYVLC. The chain crosses the membrane as a helical; Signal-anchor for type II membrane protein span at residues 34–54; the sequence is TVLLSLAVLLAVAVTGVVLFL. The Extracellular portion of the chain corresponds to 55 to 459; the sequence is NHTHTPGTAP…MKIRPVREDR (405 aa). The Fibrinogen C-terminal domain maps to 233–456; the sequence is CANGSRPRDC…FSEMKIRPVR (224 aa). Cysteine 242 and cysteine 271 are oxidised to a cystine. Asparagine 338 is a glycosylation site (N-linked (GlcNAc...) asparagine). Ca(2+) is bound by residues aspartate 391 and aspartate 393. Residues cysteine 399 and cysteine 412 are joined by a disulfide bond.

In terms of assembly, homotetramer; disulfide-linked.

It localises to the membrane. Functionally, acetyl group-binding receptor which shows a high-affinity and calcium-dependent binding to acetylated structures such as chitin, some N-acetylated carbohydrates, and amino acids, but not to their non-acetylated counterparts. Can facilitate the endocytosis of acetylated components. This chain is Fibrinogen C domain-containing protein 1 (Fibcd1), found in Mus musculus (Mouse).